The following is a 222-amino-acid chain: Octanoyltransferase (222 aa).

Residues 34–214 form the BPL/LPL catalytic domain; it reads GEKNSTVLIL…EFSKHDEALV (181 aa). Substrate is bound by residues 72–79, 144–146, and 157–159; these read RGGKLTWH, AIG, and GVA. C175 functions as the Acyl-thioester intermediate in the catalytic mechanism.

It belongs to the LipB family.

It localises to the cytoplasm. The enzyme catalyses octanoyl-[ACP] + L-lysyl-[protein] = N(6)-octanoyl-L-lysyl-[protein] + holo-[ACP] + H(+). Its pathway is protein modification; protein lipoylation via endogenous pathway; protein N(6)-(lipoyl)lysine from octanoyl-[acyl-carrier-protein]: step 1/2. Its function is as follows. Catalyzes the transfer of endogenously produced octanoic acid from octanoyl-acyl-carrier-protein onto the lipoyl domains of lipoate-dependent enzymes. Lipoyl-ACP can also act as a substrate although octanoyl-ACP is likely to be the physiological substrate. This is Octanoyltransferase from Paenarthrobacter aurescens (strain TC1).